The chain runs to 325 residues: DNA-directed RNA polymerase subunit alpha (325 aa).

An alpha N-terminal domain (alpha-NTD) region spans residues 1 to 231; it reads MQTSLLKPKI…DQLSVFAALE (231 aa). The alpha C-terminal domain (alpha-CTD) stretch occupies residues 246–325; that stretch reads IDPILLRPVD…ENWPPAGLDK (80 aa).

Belongs to the RNA polymerase alpha chain family. In terms of assembly, homodimer. The RNAP catalytic core consists of 2 alpha, 1 beta, 1 beta' and 1 omega subunit. When a sigma factor is associated with the core the holoenzyme is formed, which can initiate transcription.

It catalyses the reaction RNA(n) + a ribonucleoside 5'-triphosphate = RNA(n+1) + diphosphate. DNA-dependent RNA polymerase catalyzes the transcription of DNA into RNA using the four ribonucleoside triphosphates as substrates. The protein is DNA-directed RNA polymerase subunit alpha of Burkholderia mallei (strain NCTC 10247).